Reading from the N-terminus, the 175-residue chain is ATP-dependent protease subunit HslV (175 aa).

The active site involves T2. Na(+) is bound by residues G158, C161, and T164.

Belongs to the peptidase T1B family. HslV subfamily. As to quaternary structure, a double ring-shaped homohexamer of HslV is capped on each side by a ring-shaped HslU homohexamer. The assembly of the HslU/HslV complex is dependent on binding of ATP.

It is found in the cytoplasm. The catalysed reaction is ATP-dependent cleavage of peptide bonds with broad specificity.. With respect to regulation, allosterically activated by HslU binding. Functionally, protease subunit of a proteasome-like degradation complex believed to be a general protein degrading machinery. The sequence is that of ATP-dependent protease subunit HslV from Haemophilus influenzae (strain PittEE).